The following is a 336-amino-acid chain: Tryptophan--tRNA ligase 1 (336 aa).

Residues 9-11 and 17-18 each bind ATP; these read KPT and GN. The 'HIGH' region motif lies at 10 to 18; the sequence is PTGHLTLGN. Asp137 lines the L-tryptophan pocket. Residues 149–151, Val188, and 197–201 each bind ATP; these read GED and KMGKS. The short motif at 197–201 is the 'KMSKS' region element; that stretch reads KMGKS.

It belongs to the class-I aminoacyl-tRNA synthetase family. As to quaternary structure, homodimer.

Its subcellular location is the cytoplasm. The catalysed reaction is tRNA(Trp) + L-tryptophan + ATP = L-tryptophyl-tRNA(Trp) + AMP + diphosphate + H(+). Its function is as follows. Catalyzes the attachment of tryptophan to tRNA(Trp). This Streptomyces coelicolor (strain ATCC BAA-471 / A3(2) / M145) protein is Tryptophan--tRNA ligase 1.